A 630-amino-acid polypeptide reads, in one-letter code: DNA topoisomerase 4 subunit B (630 aa).

ATP is bound by residues Tyr-5, Asn-42, Asp-69, 110 to 116 (GLHGVGI), and Lys-334. The Toprim domain maps to 412 to 525 (TELFLVEGDS…NGHVYVALPP (114 aa)). Mg(2+)-binding residues include Glu-418, Asp-490, and Asp-492.

This sequence belongs to the type II topoisomerase family. ParE type 1 subfamily. As to quaternary structure, heterotetramer composed of ParC and ParE. The cofactor is Mg(2+). Mn(2+) is required as a cofactor. Ca(2+) serves as cofactor.

It catalyses the reaction ATP-dependent breakage, passage and rejoining of double-stranded DNA.. Its function is as follows. Topoisomerase IV is essential for chromosome segregation. It relaxes supercoiled DNA. Performs the decatenation events required during the replication of a circular DNA molecule. The polypeptide is DNA topoisomerase 4 subunit B (Salmonella typhi).